We begin with the raw amino-acid sequence, 292 residues long: Pyridoxal 5'-phosphate synthase subunit PdxS (292 aa).

Residue Asp22 participates in D-ribose 5-phosphate binding. Catalysis depends on Lys79, which acts as the Schiff-base intermediate with D-ribose 5-phosphate. Gly151 contacts D-ribose 5-phosphate. Arg163 is a binding site for D-glyceraldehyde 3-phosphate. D-ribose 5-phosphate-binding positions include Gly212 and 233-234 (GS).

Belongs to the PdxS/SNZ family. In terms of assembly, in the presence of PdxT, forms a dodecamer of heterodimers.

It catalyses the reaction aldehydo-D-ribose 5-phosphate + D-glyceraldehyde 3-phosphate + L-glutamine = pyridoxal 5'-phosphate + L-glutamate + phosphate + 3 H2O + H(+). It functions in the pathway cofactor biosynthesis; pyridoxal 5'-phosphate biosynthesis. Its function is as follows. Catalyzes the formation of pyridoxal 5'-phosphate from ribose 5-phosphate (RBP), glyceraldehyde 3-phosphate (G3P) and ammonia. The ammonia is provided by the PdxT subunit. Can also use ribulose 5-phosphate and dihydroxyacetone phosphate as substrates, resulting from enzyme-catalyzed isomerization of RBP and G3P, respectively. In Caldanaerobacter subterraneus subsp. tengcongensis (strain DSM 15242 / JCM 11007 / NBRC 100824 / MB4) (Thermoanaerobacter tengcongensis), this protein is Pyridoxal 5'-phosphate synthase subunit PdxS.